The following is a 102-amino-acid chain: Small ribosomal subunit protein uS10 (102 aa).

The protein belongs to the universal ribosomal protein uS10 family. As to quaternary structure, part of the 30S ribosomal subunit.

In terms of biological role, involved in the binding of tRNA to the ribosomes. This Heliobacterium modesticaldum (strain ATCC 51547 / Ice1) protein is Small ribosomal subunit protein uS10.